Here is a 48-residue protein sequence, read N- to C-terminus: U-reduvitoxin-Pr5a (48 aa).

The signal sequence occupies residues 1 to 19 (MRLFLIFTFIVASLASVYG). Disulfide bonds link Cys-20/Cys-34, Cys-27/Cys-39, and Cys-33/Cys-44.

This sequence belongs to the venom Ptu1-like knottin family. Expressed by the venom gland.

Its subcellular location is the secreted. Binds reversibly and blocks P/Q-type voltage-gated calcium channels (Cav). In Platymeris rhadamanthus (Red spot assassin bug), this protein is U-reduvitoxin-Pr5a.